Here is a 570-residue protein sequence, read N- to C-terminus: Sulfite reductase [NADPH] hemoprotein beta-component (570 aa).

[4Fe-4S] cluster-binding residues include Cys-434, Cys-440, Cys-479, and Cys-483. Residue Cys-483 coordinates siroheme.

It belongs to the nitrite and sulfite reductase 4Fe-4S domain family. In terms of assembly, alpha(8)-beta(8). The alpha component is a flavoprotein, the beta component is a hemoprotein. Siroheme is required as a cofactor. The cofactor is [4Fe-4S] cluster.

The catalysed reaction is hydrogen sulfide + 3 NADP(+) + 3 H2O = sulfite + 3 NADPH + 4 H(+). The protein operates within sulfur metabolism; hydrogen sulfide biosynthesis; hydrogen sulfide from sulfite (NADPH route): step 1/1. Component of the sulfite reductase complex that catalyzes the 6-electron reduction of sulfite to sulfide. This is one of several activities required for the biosynthesis of L-cysteine from sulfate. The chain is Sulfite reductase [NADPH] hemoprotein beta-component (cysI) from Salmonella typhimurium (strain LT2 / SGSC1412 / ATCC 700720).